The following is a 621-amino-acid chain: F-box only protein 21 (621 aa).

One can recognise an F-box domain in the interval Ser28 to Phe77.

As to quaternary structure, interacts with SKP1 and CUL1.

In terms of biological role, substrate-recognition component of the SCF (SKP1-CUL1-F-box protein)-type E3 ubiquitin ligase complex. In Pongo abelii (Sumatran orangutan), this protein is F-box only protein 21 (FBXO21).